Consider the following 351-residue polypeptide: Nuclear inhibitor of protein phosphatase 1 (351 aa).

The tract at residues 1 to 142 (MAAAVNSGSS…LPSAVKGDEK (142 aa)) is interaction with CDC5L, SF3B1 and MELK. The FHA domain maps to 49-101 (YLFGRNPDLCDFTIDHQSCSRVHAALVYHKHLKRVFLIDLNSTHGTFLGHIRL). The interval 143–224 (MGGEDDELKG…VDPSVGRFRN (82 aa)) is interaction with EED. Phosphothreonine is present on threonine 161. Phosphoserine is present on residues serine 178 and serine 199. 2 consecutive short sequence motifs (nuclear localization signal) follow at residues 185-209 (GNLD…DDEI) and 210-240 (INPE…RMEG). Positions 191 to 200 (RPKRKRKNSR) are involved in PP-1 inhibition. Residues 200-203 (RVTF) form an involved in PP-1 binding region. Serine 204 carries the post-translational modification Phosphoserine. Position 249 is a phosphoserine (serine 249). The residue at position 264 (tyrosine 264) is a Phosphotyrosine. The tract at residues 310–329 (AVAINPTPNPAVYNPEAVNE) is interaction with EED. The segment at 314 to 351 (NPTPNPAVYNPEAVNEPKKKKYAKEAWPGKKPTPSLLI) is disordered. Residues 330-351 (PKKKKYAKEAWPGKKPTPSLLI) form an RNA-binding region. The segment at 331 to 337 (KKKKYAK) is involved in PP-1 inhibition. Tyrosine 335 is subject to Phosphotyrosine.

Interacts with phosphorylated CDC5L, SF3B1 and MELK. Part of the spliceosome. Interacts with PPP1CA, PPP1CB and PPP1CC. Interacts with EED. Part of a complex consisting of PPP1R8, EED, HDAC2 and PP-1. In terms of processing, may be inactivated by phosphorylation on Ser-199 or Ser-204.

It localises to the nucleus. The protein resides in the nucleus speckle. Inhibitor subunit of the major nuclear protein phosphatase-1 (PP-1). It has RNA-binding activity but does not cleave RNA and may target PP-1 to RNA-associated substrates. May also be involved in pre-mRNA splicing. Binds DNA and might act as a transcriptional repressor. Essential for cell proliferation and early embryonic development. The sequence is that of Nuclear inhibitor of protein phosphatase 1 (Ppp1r8) from Mus musculus (Mouse).